An 85-amino-acid chain; its full sequence is Large ribosomal subunit protein bL27 (85 aa).

A disordered region spans residues 1 to 21 (MAHKKGLGSTKNGRDSQAKRL).

This sequence belongs to the bacterial ribosomal protein bL27 family.

The polypeptide is Large ribosomal subunit protein bL27 (Thermus thermophilus (strain ATCC BAA-163 / DSM 7039 / HB27)).